The chain runs to 530 residues: Autoinducer-2 kinase (530 aa).

This sequence belongs to the FGGY kinase family.

Its subcellular location is the cytoplasm. The catalysed reaction is (S)-4,5-dihydroxypentane-2,3-dione + ATP = (2S)-2-hydroxy-3,4-dioxopentyl phosphate + ADP + H(+). In terms of biological role, catalyzes the phosphorylation of autoinducer-2 (AI-2) to phospho-AI-2, which subsequently inactivates the transcriptional regulator LsrR and leads to the transcription of the lsr operon. Phosphorylates the ring-open form of (S)-4,5-dihydroxypentane-2,3-dione (DPD), which is the precursor to all AI-2 signaling molecules, at the C5 position. This chain is Autoinducer-2 kinase, found in Escherichia coli O9:H4 (strain HS).